A 264-amino-acid chain; its full sequence is Undecaprenyl-diphosphatase (264 aa).

8 helical membrane-spanning segments follow: residues Met1–Ile21, Gly40–Trp60, Met81–Glu101, Thr109–Ala129, Ile140–Val160, Phe183–Ile203, Ala211–Leu231, and Phe239–Ala259.

Belongs to the UppP family.

The protein localises to the cell membrane. The enzyme catalyses di-trans,octa-cis-undecaprenyl diphosphate + H2O = di-trans,octa-cis-undecaprenyl phosphate + phosphate + H(+). Functionally, catalyzes the dephosphorylation of undecaprenyl diphosphate (UPP). Confers resistance to bacitracin. In Pelotomaculum thermopropionicum (strain DSM 13744 / JCM 10971 / SI), this protein is Undecaprenyl-diphosphatase.